The primary structure comprises 112 residues: Putative UPF0320 protein YEL074W (112 aa).

The segment at E93–K112 is disordered.

This sequence belongs to the UPF0320 family.

This Saccharomyces cerevisiae (strain ATCC 204508 / S288c) (Baker's yeast) protein is Putative UPF0320 protein YEL074W.